A 220-amino-acid chain; its full sequence is Peptidyl-tRNA hydrolase (220 aa).

Residue Tyr-14 participates in tRNA binding. Catalysis depends on His-19, which acts as the Proton acceptor. TRNA contacts are provided by Phe-66, Asn-68, and Asn-114. The segment at 184-220 is disordered; that stretch reads QAFNSTDLRPRPEPVPAPQPADVSGPQETGPAERPEV.

Belongs to the PTH family. As to quaternary structure, monomer.

The protein resides in the cytoplasm. The catalysed reaction is an N-acyl-L-alpha-aminoacyl-tRNA + H2O = an N-acyl-L-amino acid + a tRNA + H(+). In terms of biological role, hydrolyzes ribosome-free peptidyl-tRNAs (with 1 or more amino acids incorporated), which drop off the ribosome during protein synthesis, or as a result of ribosome stalling. Functionally, catalyzes the release of premature peptidyl moieties from peptidyl-tRNA molecules trapped in stalled 50S ribosomal subunits, and thus maintains levels of free tRNAs and 50S ribosomes. This chain is Peptidyl-tRNA hydrolase, found in Deinococcus deserti (strain DSM 17065 / CIP 109153 / LMG 22923 / VCD115).